Consider the following 286-residue polypeptide: Prepilin leader peptidase/N-methyltransferase (286 aa).

A helical membrane pass occupies residues 10-30 (FAVPLAAVLGLLVGSFLNVVI). Residues Cys-70, Cys-73, Cys-95, and Cys-98 each contribute to the Zn(2+) site. 6 consecutive transmembrane segments (helical) span residues 102-122 (ISIR…LVAW), 126-146 (WSWI…LTFI), 157-177 (MTLP…FVPL), 181-201 (VLGA…YKLL), 224-244 (ISAL…AAIV), and 250-270 (GRHF…FTAN).

This sequence belongs to the peptidase A24 family. Zn(2+) serves as cofactor.

Its subcellular location is the cell inner membrane. The enzyme catalyses Typically cleaves a -Gly-|-Phe- bond to release an N-terminal, basic peptide of 5-8 residues from type IV prepilin, and then N-methylates the new N-terminal amino group, the methyl donor being S-adenosyl-L-methionine.. Its function is as follows. Plays an essential role in type IV pili and type II pseudopili formation by proteolytically removing the leader sequence from substrate proteins and subsequently monomethylating the alpha-amino group of the newly exposed N-terminal phenylalanine. This Neisseria gonorrhoeae protein is Prepilin leader peptidase/N-methyltransferase (pilD).